The chain runs to 168 residues: ATP synthase subunit b (168 aa).

A helical transmembrane segment spans residues 11–31 (NTVLGNIIVVSGAFIILLVLL).

This sequence belongs to the ATPase B chain family. F-type ATPases have 2 components, F(1) - the catalytic core - and F(0) - the membrane proton channel. F(1) has five subunits: alpha(3), beta(3), gamma(1), delta(1), epsilon(1). F(0) has three main subunits: a(1), b(2) and c(10-14). The alpha and beta chains form an alternating ring which encloses part of the gamma chain. F(1) is attached to F(0) by a central stalk formed by the gamma and epsilon chains, while a peripheral stalk is formed by the delta and b chains.

It localises to the cell membrane. In terms of biological role, f(1)F(0) ATP synthase produces ATP from ADP in the presence of a proton or sodium gradient. F-type ATPases consist of two structural domains, F(1) containing the extramembraneous catalytic core and F(0) containing the membrane proton channel, linked together by a central stalk and a peripheral stalk. During catalysis, ATP synthesis in the catalytic domain of F(1) is coupled via a rotary mechanism of the central stalk subunits to proton translocation. Functionally, component of the F(0) channel, it forms part of the peripheral stalk, linking F(1) to F(0). The sequence is that of ATP synthase subunit b from Lactococcus lactis subsp. lactis (strain IL1403) (Streptococcus lactis).